The sequence spans 204 residues: Ras-related protein RabL (204 aa).

14–21 (GDSNVGKT) contacts GTP. Residues 36-44 (RPPSIGPDY) carry the Effector region motif. GTP contacts are provided by residues 62 to 66 (DTCGQ) and 120 to 123 (TKSD). S-geranylgeranyl cysteine attachment occurs at residues Cys203 and Cys204.

This sequence belongs to the small GTPase superfamily. Rab family.

The protein resides in the cell membrane. This chain is Ras-related protein RabL (rabL), found in Dictyostelium discoideum (Social amoeba).